The sequence spans 424 residues: Inhibin beta A chain (424 aa).

Residues 1–20 (MPLLWLRGFLLASCWIIVRS) form the signal peptide. The propeptide occupies 21 to 308 (SPTPGSEGHG…EDHPHRRRRR (288 aa)). N-linked (GlcNAc...) asparagine glycosylation occurs at asparagine 165. Residues 264–275 (EVDGDGKKKDGS) are compositionally biased toward basic and acidic residues. Residues 264–306 (EVDGDGKKKDGSDGGLEEEKEQSHRPFLMLQARQSEDHPHRRR) form a disordered region. Intrachain disulfides connect cysteine 312-cysteine 320, cysteine 319-cysteine 389, cysteine 348-cysteine 421, and cysteine 352-cysteine 423.

It belongs to the TGF-beta family. In terms of assembly, dimeric, linked by one or more disulfide bonds. Inhibin A is a dimer of alpha/INHA and beta-A/INHBA. Activin A is a homodimer of beta-A/INHBA. Activin AB is a dimer of beta-A/INHBA and beta-B/INHBB. Interacts with FST and FSTL3; these interactions prevent activin A interaction to its type II receptor. Activin A interacts with ACVR2A. Activin A interacts with BMPR2. Inhibin A interacts with ACVR1; this interaction creates a non-signaling complex (NSC) that inhibits ACVR1-mediated BMP signaling. Inhibin A interacts with ACVR2A. Uterus, ovary and liver.

Its subcellular location is the secreted. Inhibins/activins are involved in regulating a number of diverse functions such as hypothalamic and pituitary hormone secretion, gonadal hormone secretion, germ cell development and maturation, erythroid differentiation, insulin secretion, nerve cell survival, embryonic axial development or bone growth, depending on their subunit composition. In terms of biological role, activin A is a homodimer of INHBA that plays a role in several essential biological processes including embryonic development, stem cell maintenance and differentiation, haematopoiesis, cell proliferation and tissue fibrosis. Signals through type I (such as ACVR1B or ACVR1C) and type II receptors (such as ACVR2A, ACVR2B or BMPR2) which, upon ligand binding, phosphorylate SMAD2 and SMAD3 intracellular signaling mediators that form a complex with SMAD4, translocate to the nucleus and modulate gene expression. Can also activate alternative non-canonical intracellular signaling pathways including the p38 MAPK, extracellular signal-regulated kinases 1/2 (ERK1/2) and c-Jun N-terminal kinases (JNKs) to modulate cell migration and differentiation. Alternatively, promotes osteoblastic differentiation via ACVRL1-SMAD1/5/9 pathway. In addition, can engage the type I receptor ACVR1 to form an ACVR1-activin A-type II receptor non-signaling complex (NSC) that renders receptors unavailable for engagement with BMPs, hence resulting in an apparent inhibition of ACVR1-mediated BMP signaling. Functionally, inhibin A is a dimer of alpha/INHA and beta-A/INHBA that functions as a feedback regulator in the hypothalamic-pituitary-gonadal (HPG) axis. Inhibits the secretion of FSH from the anterior pituitary gland by acting on pituitary gonadotrope cells. Antagonizes activin A by binding to the proteoglycan, betaglycan, and forming a stable complex with and, thereby, sequestering type II activin receptors while excluding type I receptor. This Mus musculus (Mouse) protein is Inhibin beta A chain (Inhba).